The primary structure comprises 705 residues: Fatty acid oxidation complex subunit alpha (705 aa).

The segment at 1–190 is enoyl-CoA hydratase; that stretch reads MSEQKAFNLK…KLGVVDACVP (190 aa). The 3-hydroxyacyl-CoA dehydrogenase stretch occupies residues 308–705; it reads SKVGMVGVLG…AGEGRRFYDN (398 aa).

The protein in the N-terminal section; belongs to the enoyl-CoA hydratase/isomerase family. In the central section; belongs to the 3-hydroxyacyl-CoA dehydrogenase family. In terms of assembly, heterotetramer of two alpha chains (FadJ) and two beta chains (FadI).

The protein resides in the cytoplasm. The catalysed reaction is a (3S)-3-hydroxyacyl-CoA = a (2E)-enoyl-CoA + H2O. The enzyme catalyses a 4-saturated-(3S)-3-hydroxyacyl-CoA = a (3E)-enoyl-CoA + H2O. It catalyses the reaction a (3S)-3-hydroxyacyl-CoA + NAD(+) = a 3-oxoacyl-CoA + NADH + H(+). It carries out the reaction (3S)-3-hydroxybutanoyl-CoA = (3R)-3-hydroxybutanoyl-CoA. It participates in lipid metabolism; fatty acid beta-oxidation. Its function is as follows. Catalyzes the formation of a hydroxyacyl-CoA by addition of water on enoyl-CoA. Also exhibits 3-hydroxyacyl-CoA epimerase and 3-hydroxyacyl-CoA dehydrogenase activities. The chain is Fatty acid oxidation complex subunit alpha from Vibrio vulnificus (strain CMCP6).